The following is a 635-amino-acid chain: S-type anion channel SLAH3 (635 aa).

The Cytoplasmic portion of the chain corresponds to M1–P253. Residues S102–K121 are compositionally biased toward polar residues. The interval S102–A173 is disordered. Residues N153–G165 show a composition bias toward basic residues. The residue at position 189 (S189) is a Phosphoserine. The interval E193–T217 is disordered. Residues F254–W276 traverse the membrane as a helical segment. Over K277–W299 the chain is Extracellular. The chain crosses the membrane as a helical span at residues F300 to F320. The Cytoplasmic portion of the chain corresponds to F321–N335. A helical transmembrane segment spans residues F336–I356. Over T357–D358 the chain is Extracellular. A helical membrane pass occupies residues L359–Y379. Over G380–P396 the chain is Cytoplasmic. Residues T397–L417 traverse the membrane as a helical segment. The Extracellular portion of the chain corresponds to R418–E419. Residues G420 to Y440 form a helical membrane-spanning segment. Topologically, residues Q441–P455 are cytoplasmic. A helical membrane pass occupies residues V456 to G476. Position 477 (S477) is a topological domain, extracellular. The chain crosses the membrane as a helical span at residues F478 to V498. At R499 to R504 the chain is on the cytoplasmic side. A helical transmembrane segment spans residues G505–A525. Residues T526 to M541 are Extracellular-facing. The chain crosses the membrane as a helical span at residues C542 to I562. The Cytoplasmic segment spans residues H563 to S635. A disordered region spans residues F611–S635. Residues S614–S635 are compositionally biased toward polar residues.

It belongs to the SLAC1 S-type anion channel family. As to quaternary structure, homotrimer. Interacts with KAT1. Expressed in the whole plant, escpecially in vascular systems.

It localises to the cell membrane. Slow, weak voltage-dependent S-type anion efflux channel involved in maintenance of anion homeostasis. Binds to the highly selective inward-rectifying potassium channel KAT1 and inhibits its activity. Functions as an essential negative regulator of inward potassium channels in guard cells. Essential for the efficient stomatal closure and opening in guard cells. This Arabidopsis thaliana (Mouse-ear cress) protein is S-type anion channel SLAH3 (SLAH3).